A 270-amino-acid polypeptide reads, in one-letter code: NAD kinase (270 aa).

The Proton acceptor role is filled by aspartate 63. Residues 63–64 (DG), 131–132 (NE), lysine 142, arginine 159, aspartate 161, 172–177 (TAYAMS), alanine 196, and glutamine 230 contribute to the NAD(+) site.

The protein belongs to the NAD kinase family. A divalent metal cation is required as a cofactor.

The protein resides in the cytoplasm. It carries out the reaction NAD(+) + ATP = ADP + NADP(+) + H(+). In terms of biological role, involved in the regulation of the intracellular balance of NAD and NADP, and is a key enzyme in the biosynthesis of NADP. Catalyzes specifically the phosphorylation on 2'-hydroxyl of the adenosine moiety of NAD to yield NADP. The chain is NAD kinase from Methanoculleus marisnigri (strain ATCC 35101 / DSM 1498 / JR1).